A 283-amino-acid chain; its full sequence is Agmatinase (283 aa).

The a divalent metal cation site is built by His-112, Asp-131, His-133, Asp-135, Asp-211, and Asp-213.

This sequence belongs to the arginase family. Agmatinase subfamily. As to quaternary structure, homotetramer. The cofactor is a divalent metal cation.

It catalyses the reaction agmatine + H2O = urea + putrescine. It participates in amine and polyamine biosynthesis; putrescine biosynthesis via agmatine pathway; putrescine from agmatine: step 1/1. With respect to regulation, inhibited by putrescine. Activity is not affected by arginine and ornithine. Catalyzes the formation of putrescine from agmatine. Cannot use arginine. This Pyrococcus horikoshii (strain ATCC 700860 / DSM 12428 / JCM 9974 / NBRC 100139 / OT-3) protein is Agmatinase.